The primary structure comprises 406 residues: Argininosuccinate synthase (406 aa).

Residues 14-22 (AYSGGLDTS) and alanine 41 each bind ATP. 2 residues coordinate L-citrulline: tyrosine 92 and serine 97. Glycine 122 lines the ATP pocket. Residues threonine 124, asparagine 128, and aspartate 129 each coordinate L-aspartate. Asparagine 128 provides a ligand contact to L-citrulline. The L-citrulline site is built by arginine 132, serine 181, serine 190, glutamate 266, and tyrosine 278.

This sequence belongs to the argininosuccinate synthase family. Type 1 subfamily. In terms of assembly, homotetramer.

It localises to the cytoplasm. The catalysed reaction is L-citrulline + L-aspartate + ATP = 2-(N(omega)-L-arginino)succinate + AMP + diphosphate + H(+). It participates in amino-acid biosynthesis; L-arginine biosynthesis; L-arginine from L-ornithine and carbamoyl phosphate: step 2/3. The chain is Argininosuccinate synthase from Geobacter metallireducens (strain ATCC 53774 / DSM 7210 / GS-15).